Reading from the N-terminus, the 203-residue chain is Small ribosomal subunit protein uS4 (203 aa).

Residues 93–155 (RRLDSIVYRL…SKNLQQIRDA (63 aa)) form the S4 RNA-binding domain.

The protein belongs to the universal ribosomal protein uS4 family. Part of the 30S ribosomal subunit. Contacts protein S5. The interaction surface between S4 and S5 is involved in control of translational fidelity.

One of the primary rRNA binding proteins, it binds directly to 16S rRNA where it nucleates assembly of the body of the 30S subunit. Its function is as follows. With S5 and S12 plays an important role in translational accuracy. The protein is Small ribosomal subunit protein uS4 of Lactobacillus acidophilus (strain ATCC 700396 / NCK56 / N2 / NCFM).